The sequence spans 169 residues: MTERAILAGGCFWGMQDLIRKRPGVLRTRVGYTGGDVPNATYRNHGSHAEAIEIEFDPSRIGYRDLLEFFFQIHDPSTANRQGNDVGASYRSAIFYEDEEQRRVAEETIAEVDASGLWSGKVVTEVSPAGPFWEAGPEHQDYLERIPWGYTCHFPRPGWTLPKREAAGD.

C11 is an active-site residue.

The protein belongs to the MsrA Met sulfoxide reductase family.

The catalysed reaction is L-methionyl-[protein] + [thioredoxin]-disulfide + H2O = L-methionyl-(S)-S-oxide-[protein] + [thioredoxin]-dithiol. The enzyme catalyses [thioredoxin]-disulfide + L-methionine + H2O = L-methionine (S)-S-oxide + [thioredoxin]-dithiol. In terms of biological role, has an important function as a repair enzyme for proteins that have been inactivated by oxidation. Catalyzes the reversible oxidation-reduction of methionine sulfoxide in proteins to methionine. In Leifsonia xyli subsp. xyli (strain CTCB07), this protein is Peptide methionine sulfoxide reductase MsrA.